The sequence spans 417 residues: Gamma-glutamyl phosphate reductase (417 aa).

This sequence belongs to the gamma-glutamyl phosphate reductase family.

The protein resides in the cytoplasm. It catalyses the reaction L-glutamate 5-semialdehyde + phosphate + NADP(+) = L-glutamyl 5-phosphate + NADPH + H(+). The protein operates within amino-acid biosynthesis; L-proline biosynthesis; L-glutamate 5-semialdehyde from L-glutamate: step 2/2. Its function is as follows. Catalyzes the NADPH-dependent reduction of L-glutamate 5-phosphate into L-glutamate 5-semialdehyde and phosphate. The product spontaneously undergoes cyclization to form 1-pyrroline-5-carboxylate. The polypeptide is Gamma-glutamyl phosphate reductase (Pectobacterium carotovorum subsp. carotovorum (strain PC1)).